The primary structure comprises 199 residues: 7-methyl-GTP pyrophosphatase (199 aa).

The active-site Proton acceptor is Asp-76.

Belongs to the Maf family. YceF subfamily. A divalent metal cation serves as cofactor.

It is found in the cytoplasm. It carries out the reaction N(7)-methyl-GTP + H2O = N(7)-methyl-GMP + diphosphate + H(+). Its function is as follows. Nucleoside triphosphate pyrophosphatase that hydrolyzes 7-methyl-GTP (m(7)GTP). May have a dual role in cell division arrest and in preventing the incorporation of modified nucleotides into cellular nucleic acids. The protein is 7-methyl-GTP pyrophosphatase of Mesorhizobium japonicum (strain LMG 29417 / CECT 9101 / MAFF 303099) (Mesorhizobium loti (strain MAFF 303099)).